Here is a 100-residue protein sequence, read N- to C-terminus: Small ribosomal subunit protein uS14c (100 aa).

It belongs to the universal ribosomal protein uS14 family. In terms of assembly, part of the 30S ribosomal subunit.

It is found in the plastid. The protein resides in the chloroplast. In terms of biological role, binds 16S rRNA, required for the assembly of 30S particles. The polypeptide is Small ribosomal subunit protein uS14c (Cycas taitungensis (Prince sago)).